Reading from the N-terminus, the 146-residue chain is Leghemoglobin 1 (146 aa).

Residues 2-146 form the Globin domain; that stretch reads GFTEKQEALV…LAAAIKKAMG (145 aa). Residue Y29 is modified to Nitrated tyrosine. S44 contacts heme b. Position 44 is a phosphoserine (S44). An O2-binding site is contributed by H61. 3 residues coordinate heme b: K64, H93, and K96. Y134 is modified (nitrated tyrosine).

The protein belongs to the plant globin family. Monomer. Post-translationally, nitrated in effective nodules and particularly in hypoxic conditions; this mechanism may play a protective role in the symbiosis by buffering toxic peroxynitrite NO(2)(-). Nitration level decrease during nodule senescence. Phosphorylation at Ser-44 disrupts the molecular environment of its porphyrin ring oxygen binding pocket, thus leading to a reduced oxygen consumption and to the delivery of oxygen O(2) to symbiosomes. In terms of tissue distribution, root nodules.

It is found in the cytoplasm. It localises to the cytosol. Its subcellular location is the nucleus. Functionally, leghemoglobin that reversibly binds oxygen O(2) through a pentacoordinated heme iron. In root nodules, facilitates the diffusion of oxygen to the bacteroids while preventing the bacterial nitrogenase from being inactivated by buffering dioxygen, nitric oxide and carbon monoxide, and promoting the formation of reactive oxygen species (ROS, e.g. H(2)O(2)). This role is essential for symbiotic nitrogen fixation (SNF). This is Leghemoglobin 1 from Medicago truncatula (Barrel medic).